A 386-amino-acid chain; its full sequence is Protein RecA (386 aa).

Residue 76-83 coordinates ATP; that stretch reads GPESSGKT. Positions 362–386 are disordered; that stretch reads FDDEDDDFDASTAPAGTFTEVTTEN.

The protein belongs to the RecA family.

It is found in the cytoplasm. Functionally, can catalyze the hydrolysis of ATP in the presence of single-stranded DNA, the ATP-dependent uptake of single-stranded DNA by duplex DNA, and the ATP-dependent hybridization of homologous single-stranded DNAs. It interacts with LexA causing its activation and leading to its autocatalytic cleavage. This is Protein RecA from Corynebacterium efficiens (strain DSM 44549 / YS-314 / AJ 12310 / JCM 11189 / NBRC 100395).